Consider the following 545-residue polypeptide: Methionine--tRNA ligase (545 aa).

Residues 15–25 carry the 'HIGH' region motif; that stretch reads PYANGPIHLGH. 4 residues coordinate Zn(2+): cysteine 146, cysteine 149, cysteine 159, and cysteine 162. The 'KMSKS' region signature appears at 332 to 336; sequence KMSKS. Lysine 335 provides a ligand contact to ATP.

This sequence belongs to the class-I aminoacyl-tRNA synthetase family. MetG type 1 subfamily. In terms of assembly, monomer. Zn(2+) is required as a cofactor.

The protein resides in the cytoplasm. It carries out the reaction tRNA(Met) + L-methionine + ATP = L-methionyl-tRNA(Met) + AMP + diphosphate. In terms of biological role, is required not only for elongation of protein synthesis but also for the initiation of all mRNA translation through initiator tRNA(fMet) aminoacylation. In Hamiltonella defensa subsp. Acyrthosiphon pisum (strain 5AT), this protein is Methionine--tRNA ligase.